Consider the following 200-residue polypeptide: Lipopolysaccharide core heptose(II)-phosphate phosphatase (200 aa).

Positions Met1–Ala25 are cleaved as a signal peptide.

This sequence belongs to the phosphoglycerate mutase family. Ais subfamily.

It localises to the periplasm. It participates in bacterial outer membrane biogenesis; lipopolysaccharide metabolism. Catalyzes the dephosphorylation of heptose(II) of the outer membrane lipopolysaccharide core. The sequence is that of Lipopolysaccharide core heptose(II)-phosphate phosphatase from Shigella flexneri serotype 5b (strain 8401).